A 180-amino-acid polypeptide reads, in one-letter code: Large ribosomal subunit protein uL5 (180 aa).

This sequence belongs to the universal ribosomal protein uL5 family. Part of the 50S ribosomal subunit; part of the 5S rRNA/L5/L18/L25 subcomplex. Contacts the 5S rRNA and the P site tRNA. Forms a bridge to the 30S subunit in the 70S ribosome.

In terms of biological role, this is one of the proteins that bind and probably mediate the attachment of the 5S RNA into the large ribosomal subunit, where it forms part of the central protuberance. In the 70S ribosome it contacts protein S13 of the 30S subunit (bridge B1b), connecting the 2 subunits; this bridge is implicated in subunit movement. Contacts the P site tRNA; the 5S rRNA and some of its associated proteins might help stabilize positioning of ribosome-bound tRNAs. This is Large ribosomal subunit protein uL5 from Clostridium tetani (strain Massachusetts / E88).